The primary structure comprises 1018 residues: Transmembrane protein 132A (1018 aa).

A signal peptide spans 1–32; it reads MTERKAAAPRGPYGAWFCLLVALALEVVRVSS. At 33-846 the chain is on the extracellular side; sequence NHDTLDPIYL…VTDLELGMYA (814 aa). A glycan (N-linked (GlcNAc...) asparagine) is linked at asparagine 276. The tract at residues 606–911 is binds to HSPA5/GRP78; it reads IEVRSPLSDA…QLDRCSSSGP (306 aa). The confers cellular localization similar to full-length form stretch occupies residues 666-1018; that stretch reads LPAPKQEVAL…NYMERIRGSS (353 aa). Over residues 807 to 818 the composition is skewed to basic and acidic residues; the sequence is ERAEEEAGKEEN. The interval 807 to 833 is disordered; it reads ERAEEEAGKEENEAKEEEEDEEEMVPA. A compositionally biased stretch (acidic residues) spans 819–830; the sequence is EAKEEEEDEEEM. The helical transmembrane segment at 847 to 867 threads the bilayer; sequence LLGIFCLAILIFLVNGVVFVL. The Cytoplasmic segment spans residues 868–1018; it reads RYQRKEPPDS…NYMERIRGSS (151 aa). The segment at 900–956 is disordered; sequence SRQLDRCSSSGPPKGEGGCPCESGAGGDASTVAPSASESPAGSSSTLARKEAGGRRK. Low complexity-rich tracts occupy residues 906–922 and 932–944; these read CSSS…PCES and APSA…GSSS.

The protein belongs to the TMEM132 family. As to quaternary structure, interacts with HSPA5/GRP78.

The protein localises to the golgi apparatus membrane. The protein resides in the endoplasmic reticulum membrane. In terms of biological role, may play a role in embryonic and postnatal development of the brain. Increased resistance to cell death induced by serum starvation in cultured cells. Regulates cAMP-induced GFAP gene expression via STAT3 phosphorylation. The sequence is that of Transmembrane protein 132A (Tmem132a) from Mus musculus (Mouse).